The following is a 126-amino-acid chain: Acyl carrier protein 2, mitochondrial (126 aa).

A mitochondrion-targeting transit peptide spans 1–36 (MAARGAMLRYLRVNVNPTIQNPRECVLPFSILLRRF). The 76-residue stretch at 48-123 (SEVTDRVLSV…LAVDFIASHP (76 aa)) folds into the Carrier domain. Residue Ser-83 is modified to O-(pantetheine 4'-phosphoryl)serine.

This sequence belongs to the acyl carrier protein (ACP) family. As to quaternary structure, complex I is composed of at least 49 different subunits. Post-translationally, 4'-phosphopantetheine is transferred from CoA to a specific serine of the apo-ACP-like protein.

It is found in the mitochondrion. It participates in lipid metabolism; fatty acid biosynthesis. Carrier of the growing fatty acid chain in fatty acid biosynthesis. May be involved in the synthesis of short and medium chain fatty acids. Accessory and non-catalytic subunit of the mitochondrial membrane respiratory chain NADH dehydrogenase (Complex I), which functions in the transfer of electrons from NADH to the respiratory chain. The sequence is that of Acyl carrier protein 2, mitochondrial (MTACP2) from Arabidopsis thaliana (Mouse-ear cress).